Reading from the N-terminus, the 211-residue chain is Endo-1,4-beta-xylanase 6 (211 aa).

The signal sequence occupies residues Met-1–Ala-16. One can recognise a GH11 domain in the interval Ala-19–Ser-210. Glu-106 acts as the Nucleophile in catalysis. The Proton donor role is filled by Glu-197.

Belongs to the glycosyl hydrolase 11 (cellulase G) family.

The protein localises to the secreted. The catalysed reaction is Endohydrolysis of (1-&gt;4)-beta-D-xylosidic linkages in xylans.. The protein operates within glycan degradation; xylan degradation. Functionally, endo-1,4-beta-xylanase involved in the hydrolysis of xylan, a major structural heterogeneous polysaccharide found in plant biomass representing the second most abundant polysaccharide in the biosphere, after cellulose. The protein is Endo-1,4-beta-xylanase 6 (XYN6) of Aspergillus niger.